The following is a 160-amino-acid chain: Large ribosomal subunit protein uL22c (160 aa).

This sequence belongs to the universal ribosomal protein uL22 family. Part of the 50S ribosomal subunit.

It localises to the plastid. It is found in the chloroplast. This protein binds specifically to 23S rRNA. Functionally, the globular domain of the protein is located near the polypeptide exit tunnel on the outside of the subunit, while an extended beta-hairpin is found that lines the wall of the exit tunnel in the center of the 70S ribosome. This chain is Large ribosomal subunit protein uL22c (rpl22), found in Arabis hirsuta (Hairy rock-cress).